A 351-amino-acid polypeptide reads, in one-letter code: DNA integrity scanning protein DisA (351 aa).

The 139-residue stretch at Arg4 to Phe142 folds into the DAC domain. ATP is bound by residues Gly71, Leu89, and Thr102–Thr106.

It belongs to the DisA family. As to quaternary structure, homooctamer. It depends on Mg(2+) as a cofactor.

The enzyme catalyses 2 ATP = 3',3'-c-di-AMP + 2 diphosphate. Functionally, participates in a DNA-damage check-point that is active prior to asymmetric division when DNA is damaged. DisA forms globular foci that rapidly scan along the chromosomes during sporulation, searching for lesions. When a lesion is present, DisA pauses at the lesion site. This triggers a cellular response that culminates in a temporary block in sporulation initiation. Also has diadenylate cyclase activity, catalyzing the condensation of 2 ATP molecules into cyclic di-AMP (c-di-AMP). c-di-AMP acts as a signaling molecule that couples DNA integrity with progression of sporulation. The rise in c-di-AMP level generated by DisA while scanning the chromosome, operates as a positive signal that advances sporulation; upon encountering a lesion, the DisA focus arrests at the damaged site and halts c-di-AMP synthesis. The polypeptide is DNA integrity scanning protein DisA (Symbiobacterium thermophilum (strain DSM 24528 / JCM 14929 / IAM 14863 / T)).